Here is a 385-residue protein sequence, read N- to C-terminus: Putative F-box protein At1g49610 (385 aa).

The F-box domain occupies 25-73 (VDSISSLPDVILQENLSLIPTKFAIRTSVLSKRWRHVWSETPSLDFDDC).

The protein is Putative F-box protein At1g49610 of Arabidopsis thaliana (Mouse-ear cress).